The chain runs to 259 residues: Carbonic anhydrase 1 (259 aa).

An N-acetylalanine modification is found at Ala1. One can recognise an Alpha-carbonic anhydrase domain in the interval His2–Phe258. His63 acts as the Proton donor/acceptor in catalysis. 3 residues coordinate Zn(2+): His93, His95, and His118. Substrate-binding positions include Thr197 and Thr197–Thr198.

It belongs to the alpha-carbonic anhydrase family. Zn(2+) is required as a cofactor.

The protein localises to the cytoplasm. It catalyses the reaction hydrogencarbonate + H(+) = CO2 + H2O. In terms of biological role, catalyzes the reversible hydration of carbon dioxide. This Chionodraco hamatus (Antarctic teleost icefish) protein is Carbonic anhydrase 1 (ca1).